A 175-amino-acid polypeptide reads, in one-letter code: MNRIVGILISILMLACIGVTMAAETPVEATIEPKNTFSEPLATQMVLLKGIFDPKVEPMDPANDAIEITGVLKLNHNEVRGVVNINNKKGEFAGKCTPFKSSNFEGVVLKCGSEGSIKVLQINIGDGKLELFGKYGDGIVFLEGKIPEMSYKSLASSASAPTSVRPEAWMVDILL.

A signal peptide spans 1-22 (MNRIVGILISILMLACIGVTMA).

This is an uncharacterized protein from Archaeoglobus fulgidus (strain ATCC 49558 / DSM 4304 / JCM 9628 / NBRC 100126 / VC-16).